Here is a 196-residue protein sequence, read N- to C-terminus: Anthranilate synthase component 2 (196 aa).

The 194-residue stretch at asparagine 3 to alanine 196 folds into the Glutamine amidotransferase type-1 domain. Position 57 to 59 (glycine 57 to glycine 59) interacts with L-glutamine. Catalysis depends on cysteine 84, which acts as the Nucleophile; for GATase activity. L-glutamine-binding positions include glutamine 88 and serine 134–leucine 135. Active-site for GATase activity residues include histidine 170 and glutamate 172.

As to quaternary structure, heterotetramer consisting of two non-identical subunits: a beta subunit (TrpG) and a large alpha subunit (TrpE).

It catalyses the reaction chorismate + L-glutamine = anthranilate + pyruvate + L-glutamate + H(+). The protein operates within amino-acid biosynthesis; L-tryptophan biosynthesis; L-tryptophan from chorismate: step 1/5. Functionally, part of a heterotetrameric complex that catalyzes the two-step biosynthesis of anthranilate, an intermediate in the biosynthesis of L-tryptophan. In the first step, the glutamine-binding beta subunit (TrpG) of anthranilate synthase (AS) provides the glutamine amidotransferase activity which generates ammonia as a substrate that, along with chorismate, is used in the second step, catalyzed by the large alpha subunit of AS (TrpE) to produce anthranilate. In the absence of TrpG, TrpE can synthesize anthranilate directly from chorismate and high concentrations of ammonia. This Vibrio parahaemolyticus serotype O3:K6 (strain RIMD 2210633) protein is Anthranilate synthase component 2 (trpG).